The sequence spans 632 residues: Probable potassium transport system protein Kup 1 (632 aa).

12 helical membrane passes run 19-39 (LVLGAVGVVFGDIGTSPLYAL), 59-79 (VISMLFWAMIIVVSIKYVVFV), 110-130 (VLMMLGIFGACMFYGDAVITP), 146-166 (PQLSQFVIPITLMILAALFLI), 178-198 (FGPIMTAWFLALGGLGILHLV), 213-233 (ITFLVEHALQAFIVLGSVFLV), 256-276 (WFVLVMPCLMLNYFGQGAMLL), 298-318 (MVLLATCATVIASQAVISGAF), 346-366 (IYLPVINWLLLVLVIGVVISF), 373-393 (AAAYGIAVTTTMVITTILAAV), 403-423 (PALVAVVGLAFIVVDLSFFAA), and 428-448 (VAEGGWFPLLLGSAAFFLLMT).

It belongs to the HAK/KUP transporter (TC 2.A.72) family.

Its subcellular location is the cell inner membrane. It carries out the reaction K(+)(in) + H(+)(in) = K(+)(out) + H(+)(out). Functionally, transport of potassium into the cell. Likely operates as a K(+):H(+) symporter. This is Probable potassium transport system protein Kup 1 from Cupriavidus necator (strain ATCC 17699 / DSM 428 / KCTC 22496 / NCIMB 10442 / H16 / Stanier 337) (Ralstonia eutropha).